We begin with the raw amino-acid sequence, 298 residues long: Protoheme IX farnesyltransferase (298 aa).

The next 9 membrane-spanning stretches (helical) occupy residues 26 to 46 (VVSL…PGVV), 52 to 72 (IFAT…NCLV), 99 to 119 (FVFL…LVNP), 120 to 140 (LTMW…TVIL), 148 to 168 (IVIG…AVTG), 174 to 194 (ALLL…ALAL), 219 to 239 (LHVL…YATQ), 241 to 261 (SGLI…YYAV), and 276 to 296 (FRYS…DHYI).

This sequence belongs to the UbiA prenyltransferase family. Protoheme IX farnesyltransferase subfamily.

Its subcellular location is the cell inner membrane. It carries out the reaction heme b + (2E,6E)-farnesyl diphosphate + H2O = Fe(II)-heme o + diphosphate. It participates in porphyrin-containing compound metabolism; heme O biosynthesis; heme O from protoheme: step 1/1. Functionally, converts heme B (protoheme IX) to heme O by substitution of the vinyl group on carbon 2 of heme B porphyrin ring with a hydroxyethyl farnesyl side group. This chain is Protoheme IX farnesyltransferase, found in Nitrosospira multiformis (strain ATCC 25196 / NCIMB 11849 / C 71).